The chain runs to 283 residues: Methyltransferase cpsF (283 aa).

It belongs to the methyltransferase superfamily. LaeA methyltransferase family.

It carries out the reaction campesine A + S-adenosyl-L-methionine = campesine B + S-adenosyl-L-homocysteine + H(+). The protein operates within alkaloid biosynthesis. In terms of biological role, methyltransferase; part of the gene cluster that mediates the biosynthesis of campesine G, a dimeric indole piperazine alkaloid that shows good insecticidal activity Galleria mellonella. Within the pathway, cpsF methylates campesine A at N13 of piperazine ring to produce campesine B. The non-canonical non-ribosomal peptide synthetase cpsA catalyzes the first steps of the pathway by producing L-tryptophanal and L-valinal from their respective amino-acids. These products condensate spontaneously to form trypyl-valyl pyrazine also known as didehydrocampesine A. The NmrA-like family domain-containing oxidoreductase cpsB is the next enzyme in cps pathway and reduces the unstable didehydrocampesine A to campesine A. The methyltransferase cpsF and the acetyltransferase cpsE both recognize N13 of piperazine ring to carry out methylation and acetylation of campesine A to produce campesine C and B, respectively. The cytochrome P450 monooxygenase cpsD then acts as a dimerase that catalyzes oxidative heterocoupling between campesine B and C to produce heterodimers with unexpected 6/5/6/6/6/6/5/6 eight-ring scaffold called campesine D. Finally,the cytochrome P450 monooxygenase cpsC is a regioselective dehydrogenase that catalyzes dehydrogenation reaction towards C2-N1 to produce campesine G. This chain is Methyltransferase cpsF, found in Aspergillus campestris (strain IBT 28561).